Reading from the N-terminus, the 722-residue chain is Glycine--tRNA ligase beta subunit (722 aa).

It belongs to the class-II aminoacyl-tRNA synthetase family. In terms of assembly, tetramer of two alpha and two beta subunits.

It localises to the cytoplasm. The enzyme catalyses tRNA(Gly) + glycine + ATP = glycyl-tRNA(Gly) + AMP + diphosphate. In Xylella fastidiosa (strain M12), this protein is Glycine--tRNA ligase beta subunit.